Here is a 256-residue protein sequence, read N- to C-terminus: Pimeloyl-[acyl-carrier protein] methyl ester esterase (256 aa).

The region spanning 15–242 (HLVLLHGWGL…AAHAPFISHP (228 aa)) is the AB hydrolase-1 domain. Substrate contacts are provided by residues Trp-22, 82–83 (SL), and 143–147 (FLALQ). Residue Ser-82 is the Nucleophile of the active site. Active-site residues include Asp-207 and His-235. A substrate-binding site is contributed by His-235.

Belongs to the AB hydrolase superfamily. Carboxylesterase BioH family. In terms of assembly, monomer.

It localises to the cytoplasm. It catalyses the reaction 6-carboxyhexanoyl-[ACP] methyl ester + H2O = 6-carboxyhexanoyl-[ACP] + methanol + H(+). It participates in cofactor biosynthesis; biotin biosynthesis. Functionally, the physiological role of BioH is to remove the methyl group introduced by BioC when the pimeloyl moiety is complete. It allows to synthesize pimeloyl-ACP via the fatty acid synthetic pathway through the hydrolysis of the ester bonds of pimeloyl-ACP esters. In Escherichia coli O17:K52:H18 (strain UMN026 / ExPEC), this protein is Pimeloyl-[acyl-carrier protein] methyl ester esterase.